The sequence spans 162 residues: UPF0262 protein HNE_1347 (162 aa).

The protein belongs to the UPF0262 family.

The chain is UPF0262 protein HNE_1347 from Hyphomonas neptunium (strain ATCC 15444).